Reading from the N-terminus, the 261-residue chain is Na(+)-translocating NADH-quinone reductase subunit C (261 aa).

A helical transmembrane segment spans residues 12–32; it reads LGVVVGLSLVCSIIVSTAAVG. Thr229 is subject to FMN phosphoryl threonine.

Composed of six subunits; NqrA, NqrB, NqrC, NqrD, NqrE and NqrF. It depends on FMN as a cofactor.

Its subcellular location is the cell inner membrane. It catalyses the reaction a ubiquinone + n Na(+)(in) + NADH + H(+) = a ubiquinol + n Na(+)(out) + NAD(+). In terms of biological role, NQR complex catalyzes the reduction of ubiquinone-1 to ubiquinol by two successive reactions, coupled with the transport of Na(+) ions from the cytoplasm to the periplasm. NqrA to NqrE are probably involved in the second step, the conversion of ubisemiquinone to ubiquinol. The protein is Na(+)-translocating NADH-quinone reductase subunit C of Vibrio campbellii (strain ATCC BAA-1116).